The sequence spans 1270 residues: Microtubule-associated tumor suppressor 1 homolog (1270 aa).

Over residues 1–14 (MTDDNSDDKIEDEL) the composition is skewed to acidic residues. Disordered stretches follow at residues 1-50 (MTDD…NSAN), 183-217 (SFHT…DKMH), and 374-402 (TEDT…SPPG). Over residues 39 to 50 (SSASSVNWNSAN) the composition is skewed to low complexity. Threonine 186 is modified (phosphothreonine). Over residues 200 to 211 (TSSLSYSTWTSS) the composition is skewed to low complexity. Phosphoserine is present on residues serine 386, serine 399, and serine 443. The span at 386-396 (SGTQNHTSELI) shows a compositional bias: polar residues. Disordered regions lie at residues 524–558 (DAAL…RTPR) and 592–622 (THSK…SSSN). Residues 538-547 (SASSPSSAIS) are compositionally biased toward low complexity. Position 629 is a phosphoserine (serine 629). Composition is skewed to polar residues over residues 701–710 (SKTTTTSGRN), 759–776 (VSSS…SSWV), and 797–816 (TGST…YSNN). The tract at residues 701 to 816 (SKTTTTSGRN…HSELSTYSNN (116 aa)) is disordered. Residues 940 to 1231 (IQHLLSEREE…RLSMENEELL (292 aa)) adopt a coiled-coil conformation. A phosphoserine mark is found at serine 1203, serine 1224, serine 1245, serine 1255, serine 1259, serine 1261, serine 1264, and serine 1268. The interval 1237 to 1270 (GDLCSPKRSPTSSAIPFQSPRNSGSFPSPSISPR) is disordered. Over residues 1244–1270 (RSPTSSAIPFQSPRNSGSFPSPSISPR) the composition is skewed to polar residues.

It belongs to the MTUS1 family. As to quaternary structure, homodimer. Interacts with AGTR2. Interacts with PTPN6. Associates with microtubules.

The protein resides in the mitochondrion. It is found in the golgi apparatus. Its subcellular location is the cell membrane. The protein localises to the nucleus. In terms of biological role, cooperates with AGTR2 to inhibit ERK2 activation and cell proliferation. May be required for AGTR2 cell surface expression. Together with PTPN6, induces UBE2V2 expression upon angiotensin-II stimulation. The polypeptide is Microtubule-associated tumor suppressor 1 homolog (MTUS1) (Pongo abelii (Sumatran orangutan)).